Here is a 192-residue protein sequence, read N- to C-terminus: 7-methyl-GTP pyrophosphatase (192 aa).

Catalysis depends on Asp-69, which acts as the Proton acceptor.

It belongs to the Maf family. YceF subfamily. It depends on a divalent metal cation as a cofactor.

It is found in the cytoplasm. It carries out the reaction N(7)-methyl-GTP + H2O = N(7)-methyl-GMP + diphosphate + H(+). Its function is as follows. Nucleoside triphosphate pyrophosphatase that hydrolyzes 7-methyl-GTP (m(7)GTP). May have a dual role in cell division arrest and in preventing the incorporation of modified nucleotides into cellular nucleic acids. This Pseudomonas putida (strain ATCC 47054 / DSM 6125 / CFBP 8728 / NCIMB 11950 / KT2440) protein is 7-methyl-GTP pyrophosphatase (maf-2).